Consider the following 612-residue polypeptide: Threonine--tRNA ligase (612 aa).

Residues 218–509 (NHRKLGVELG…LSEHFGGNFP (292 aa)) form a catalytic region. Residues C310, H361, and H486 each coordinate Zn(2+).

Belongs to the class-II aminoacyl-tRNA synthetase family. As to quaternary structure, homodimer. Zn(2+) is required as a cofactor.

It is found in the cytoplasm. It catalyses the reaction tRNA(Thr) + L-threonine + ATP = L-threonyl-tRNA(Thr) + AMP + diphosphate + H(+). Its function is as follows. Catalyzes the attachment of threonine to tRNA(Thr) in a two-step reaction: L-threonine is first activated by ATP to form Thr-AMP and then transferred to the acceptor end of tRNA(Thr). Also edits incorrectly charged L-seryl-tRNA(Thr). In Helicobacter pylori (strain Shi470), this protein is Threonine--tRNA ligase.